Reading from the N-terminus, the 133-residue chain is Nucleoid-associated protein Mb3743c (133 aa).

Positions 98–133 (GAMRPPAPPAAPPGAPGMPGMPGMPGAPGAPPVPGI) are disordered. Positions 102-113 (PPAPPAAPPGAP) are enriched in pro residues.

This sequence belongs to the YbaB/EbfC family. Homodimer.

It is found in the cytoplasm. Its subcellular location is the nucleoid. Functionally, binds to DNA and alters its conformation. May be involved in regulation of gene expression, nucleoid organization and DNA protection. The polypeptide is Nucleoid-associated protein Mb3743c (Mycobacterium bovis (strain ATCC BAA-935 / AF2122/97)).